Reading from the N-terminus, the 239-residue chain is Ribonuclease 3 (239 aa).

In terms of domain architecture, RNase III spans Arg-12–Gly-137. Glu-50 provides a ligand contact to Mg(2+). Asp-54 is a catalytic residue. Mg(2+)-binding residues include Asp-123 and Glu-126. Residue Glu-126 is part of the active site. The DRBM domain maps to Asp-162–Ile-231.

This sequence belongs to the ribonuclease III family. In terms of assembly, homodimer. Mg(2+) is required as a cofactor.

The protein resides in the cytoplasm. The enzyme catalyses Endonucleolytic cleavage to 5'-phosphomonoester.. Its function is as follows. Digests double-stranded RNA. Involved in the processing of primary rRNA transcript to yield the immediate precursors to the large and small rRNAs (23S and 16S). Processes some mRNAs, and tRNAs when they are encoded in the rRNA operon. Processes pre-crRNA and tracrRNA of type II CRISPR loci if present in the organism. This chain is Ribonuclease 3, found in Rhizobium johnstonii (strain DSM 114642 / LMG 32736 / 3841) (Rhizobium leguminosarum bv. viciae).